Consider the following 367-residue polypeptide: 4-hydroxy-3-methylbut-2-en-1-yl diphosphate synthase (flavodoxin) (367 aa).

Residues Cys265, Cys268, Cys300, and Glu307 each coordinate [4Fe-4S] cluster.

This sequence belongs to the IspG family. It depends on [4Fe-4S] cluster as a cofactor.

The enzyme catalyses (2E)-4-hydroxy-3-methylbut-2-enyl diphosphate + oxidized [flavodoxin] + H2O + 2 H(+) = 2-C-methyl-D-erythritol 2,4-cyclic diphosphate + reduced [flavodoxin]. The protein operates within isoprenoid biosynthesis; isopentenyl diphosphate biosynthesis via DXP pathway; isopentenyl diphosphate from 1-deoxy-D-xylulose 5-phosphate: step 5/6. Functionally, converts 2C-methyl-D-erythritol 2,4-cyclodiphosphate (ME-2,4cPP) into 1-hydroxy-2-methyl-2-(E)-butenyl 4-diphosphate. This chain is 4-hydroxy-3-methylbut-2-en-1-yl diphosphate synthase (flavodoxin), found in Bacillus cereus (strain ATCC 10987 / NRS 248).